The sequence spans 213 residues: Flagellin A1 (213 aa).

Residues 1-10 (MFENINEDRG) constitute a propeptide that is removed on maturation. N70, N115, and N172 each carry an N-linked (GlcNAc...) asparagine glycan.

This sequence belongs to the archaeal flagellin family. In terms of processing, glycosylated by a pentasaccharide similar to the S-layer glycoprotein, probably comprising a hexose, 2 hexuronic acids, a methyl ester of a hexuronic acid and mannose. Glycosylation is required for biosynthesis of stable flagella.

It is found in the archaeal flagellum. Functionally, major flagellin required for motility. Not involved in PibD-dependent surface adhesion. Much more abundant in cells compared to FlgA2. This Haloferax volcanii (strain ATCC 29605 / DSM 3757 / JCM 8879 / NBRC 14742 / NCIMB 2012 / VKM B-1768 / DS2) (Halobacterium volcanii) protein is Flagellin A1 (flgA1).